The primary structure comprises 370 residues: NSFL1 cofactor p47 (370 aa).

The disordered stretch occupies residues 54 to 73 (SQATPSSVSRGTAPSDNRVT). A phosphoserine mark is found at S74, S102, and S114. Disordered regions lie at residues 80–116 (HDQD…KSPN) and 138–157 (TKSP…GYRL). A Nuclear localization signal motif is present at residues 109-115 (PPRKKSP). S140 is modified (phosphoserine; by CDK1). Y167 is modified (phosphotyrosine). A Nuclear localization signal motif is present at residues 172–175 (RRRH). 3 positions are modified to phosphoserine: S176, S192, and S272. Positions 179 to 244 (DVHVVLKLWK…MEDHRDEDFV (66 aa)) constitute an SEP domain. A UBX domain is found at 291–368 (EAEPTTNIQI…NLLNAVIVQR (78 aa)).

It belongs to the NSFL1C family. Part of a ternary complex containing STX5A, NSFL1C and VCP. NSFL1C forms a homotrimer that binds to one end of a VCP homohexamer. The complex binds to membranes enriched in phosphatidylethanolamine-containing lipids and promotes Golgi membrane fusion. Interaction with VCIP135 leads to dissociation of the complex via ATP hydrolysis by VCP. Binds ubiquitin and mono-ubiquitinated proteins via its N-terminal UBA-like domain when bound to VCP. In terms of processing, phosphorylated during mitosis. Phosphorylation inhibits interaction with Golgi membranes and is required for the fragmentation of the Golgi stacks during mitosis. As to expression, highly expressed in heart, brain, spleen, lung, liver, muscle, kidney and testis.

It is found in the nucleus. The protein resides in the golgi apparatus. It localises to the golgi stack. The protein localises to the chromosome. Its subcellular location is the cytoplasm. It is found in the cytoskeleton. The protein resides in the microtubule organizing center. It localises to the centrosome. Functionally, reduces the ATPase activity of VCP. Necessary for the fragmentation of Golgi stacks during mitosis and for VCP-mediated reassembly of Golgi stacks after mitosis. May play a role in VCP-mediated formation of transitional endoplasmic reticulum (tER). Inhibits the activity of CTSL (in vitro). Together with UBXN2B/p37, regulates the centrosomal levels of kinase AURKA/Aurora A during mitotic progression by promoting AURKA removal from centrosomes in prophase. Also, regulates spindle orientation during mitosis. This is NSFL1 cofactor p47 (Nsfl1c) from Rattus norvegicus (Rat).